The chain runs to 431 residues: Enolase (431 aa).

A (2R)-2-phosphoglycerate-binding site is contributed by Gln-167. Glu-209 serves as the catalytic Proton donor. Positions 246, 289, and 316 each coordinate Mg(2+). (2R)-2-phosphoglycerate-binding residues include Lys-341, Arg-370, Ser-371, and Lys-392. Residue Lys-341 is the Proton acceptor of the active site.

It belongs to the enolase family. Component of the RNA degradosome, a multiprotein complex involved in RNA processing and mRNA degradation. The cofactor is Mg(2+).

It is found in the cytoplasm. The protein localises to the secreted. The protein resides in the cell surface. It carries out the reaction (2R)-2-phosphoglycerate = phosphoenolpyruvate + H2O. The protein operates within carbohydrate degradation; glycolysis; pyruvate from D-glyceraldehyde 3-phosphate: step 4/5. Functionally, catalyzes the reversible conversion of 2-phosphoglycerate (2-PG) into phosphoenolpyruvate (PEP). It is essential for the degradation of carbohydrates via glycolysis. This Hahella chejuensis (strain KCTC 2396) protein is Enolase.